The following is a 452-amino-acid chain: Pup--protein ligase (452 aa).

Position 9 (E9) interacts with Mg(2+). R53 is a binding site for ATP. Mg(2+) is bound at residue Y55. D57 (proton acceptor) is an active-site residue. Residue E63 participates in Mg(2+) binding. ATP-binding residues include T66 and W419.

Belongs to the Pup ligase/Pup deamidase family. Pup-conjugating enzyme subfamily.

It catalyses the reaction ATP + [prokaryotic ubiquitin-like protein]-L-glutamate + [protein]-L-lysine = ADP + phosphate + N(6)-([prokaryotic ubiquitin-like protein]-gamma-L-glutamyl)-[protein]-L-lysine.. Its pathway is protein degradation; proteasomal Pup-dependent pathway. It participates in protein modification; protein pupylation. Its function is as follows. Catalyzes the covalent attachment of the prokaryotic ubiquitin-like protein modifier Pup to the proteasomal substrate proteins, thereby targeting them for proteasomal degradation. This tagging system is termed pupylation. The ligation reaction involves the side-chain carboxylate of the C-terminal glutamate of Pup and the side-chain amino group of a substrate lysine. The sequence is that of Pup--protein ligase from Geodermatophilus obscurus (strain ATCC 25078 / DSM 43160 / JCM 3152 / CCUG 61914 / KCC A-0152 / KCTC 9177 / NBRC 13315 / NRRL B-3577 / G-20).